The primary structure comprises 239 residues: Large ribosomal subunit protein uL1 (239 aa).

Belongs to the universal ribosomal protein uL1 family. In terms of assembly, part of the 50S ribosomal subunit.

Functionally, binds directly to 23S rRNA. The L1 stalk is quite mobile in the ribosome, and is involved in E site tRNA release. In terms of biological role, protein L1 is also a translational repressor protein, it controls the translation of the L11 operon by binding to its mRNA. The sequence is that of Large ribosomal subunit protein uL1 from Rickettsia akari (strain Hartford).